A 515-amino-acid polypeptide reads, in one-letter code: Bifunctional purine biosynthesis protein PurH (515 aa).

The region spanning 1-144 (MGRKALISVS…KNHKFVTIIV (144 aa)) is the MGS-like domain.

The protein belongs to the PurH family.

The catalysed reaction is (6R)-10-formyltetrahydrofolate + 5-amino-1-(5-phospho-beta-D-ribosyl)imidazole-4-carboxamide = 5-formamido-1-(5-phospho-D-ribosyl)imidazole-4-carboxamide + (6S)-5,6,7,8-tetrahydrofolate. It catalyses the reaction IMP + H2O = 5-formamido-1-(5-phospho-D-ribosyl)imidazole-4-carboxamide. It functions in the pathway purine metabolism; IMP biosynthesis via de novo pathway; 5-formamido-1-(5-phospho-D-ribosyl)imidazole-4-carboxamide from 5-amino-1-(5-phospho-D-ribosyl)imidazole-4-carboxamide (10-formyl THF route): step 1/1. Its pathway is purine metabolism; IMP biosynthesis via de novo pathway; IMP from 5-formamido-1-(5-phospho-D-ribosyl)imidazole-4-carboxamide: step 1/1. This is Bifunctional purine biosynthesis protein PurH from Persephonella marina (strain DSM 14350 / EX-H1).